Consider the following 360-residue polypeptide: MLKEKNSAGGGKFNFFNFLKEKDNNQAEPSNVKEFISYLKNKIINEKYEITREEAIFLSQIPNNDMETLNILFNAADQIREVFCGKYFDLCTIINAKSGKCSENCKYCAQSVHFKTGTDVYGLISKELALYEAKRNENEGAHRFSLVTSGRGLNGNEKELDKLVEIYKYIGEHTSKLELCASHGICTKEALQKLVDAGVLTYHHNLESSRRFYPNVCTSHSYDDRINTIKNAKAVGLDVCSGGIFGLGETIEDRIDMALDLRALEIHSVPINVLTPIPGTPFENNEEVNPFEILKTISIYRFIMPKSFLRYCGGRIKLGEHAKTGLRCGINSALTGNFLTTTGTTIETDKKMIKELGYEI.

Positions 83-315 constitute a Radical SAM core domain; the sequence is FCGKYFDLCT…KSFLRYCGGR (233 aa). Cys-101, Cys-105, and Cys-108 together coordinate [4Fe-4S] cluster. 4 residues coordinate [2Fe-2S] cluster: Ser-145, Cys-180, Cys-240, and Arg-310.

This sequence belongs to the radical SAM superfamily. Biotin synthase family. Homodimer. It depends on [4Fe-4S] cluster as a cofactor. [2Fe-2S] cluster serves as cofactor.

It carries out the reaction (4R,5S)-dethiobiotin + (sulfur carrier)-SH + 2 reduced [2Fe-2S]-[ferredoxin] + 2 S-adenosyl-L-methionine = (sulfur carrier)-H + biotin + 2 5'-deoxyadenosine + 2 L-methionine + 2 oxidized [2Fe-2S]-[ferredoxin]. It functions in the pathway cofactor biosynthesis; biotin biosynthesis; biotin from 7,8-diaminononanoate: step 2/2. Functionally, catalyzes the conversion of dethiobiotin (DTB) to biotin by the insertion of a sulfur atom into dethiobiotin via a radical-based mechanism. This chain is Biotin synthase, found in Fusobacterium nucleatum subsp. nucleatum (strain ATCC 25586 / DSM 15643 / BCRC 10681 / CIP 101130 / JCM 8532 / KCTC 2640 / LMG 13131 / VPI 4355).